We begin with the raw amino-acid sequence, 319 residues long: 4-hydroxy-3-methylbut-2-enyl diphosphate reductase (319 aa).

Cys15 provides a ligand contact to [4Fe-4S] cluster. 2 residues coordinate (2E)-4-hydroxy-3-methylbut-2-enyl diphosphate: His44 and His77. Dimethylallyl diphosphate-binding residues include His44 and His77. Isopentenyl diphosphate-binding residues include His44 and His77. Cys99 contacts [4Fe-4S] cluster. A (2E)-4-hydroxy-3-methylbut-2-enyl diphosphate-binding site is contributed by His127. His127 provides a ligand contact to dimethylallyl diphosphate. His127 contributes to the isopentenyl diphosphate binding site. The active-site Proton donor is the Glu129. Position 167 (Thr167) interacts with (2E)-4-hydroxy-3-methylbut-2-enyl diphosphate. Cys197 contacts [4Fe-4S] cluster. (2E)-4-hydroxy-3-methylbut-2-enyl diphosphate contacts are provided by Ser225, Ser226, Asn227, and Ser269. Ser225, Ser226, Asn227, and Ser269 together coordinate dimethylallyl diphosphate. Isopentenyl diphosphate is bound by residues Ser225, Ser226, Asn227, and Ser269.

It belongs to the IspH family. The cofactor is [4Fe-4S] cluster.

It catalyses the reaction isopentenyl diphosphate + 2 oxidized [2Fe-2S]-[ferredoxin] + H2O = (2E)-4-hydroxy-3-methylbut-2-enyl diphosphate + 2 reduced [2Fe-2S]-[ferredoxin] + 2 H(+). The enzyme catalyses dimethylallyl diphosphate + 2 oxidized [2Fe-2S]-[ferredoxin] + H2O = (2E)-4-hydroxy-3-methylbut-2-enyl diphosphate + 2 reduced [2Fe-2S]-[ferredoxin] + 2 H(+). Its pathway is isoprenoid biosynthesis; dimethylallyl diphosphate biosynthesis; dimethylallyl diphosphate from (2E)-4-hydroxy-3-methylbutenyl diphosphate: step 1/1. It participates in isoprenoid biosynthesis; isopentenyl diphosphate biosynthesis via DXP pathway; isopentenyl diphosphate from 1-deoxy-D-xylulose 5-phosphate: step 6/6. In terms of biological role, catalyzes the conversion of 1-hydroxy-2-methyl-2-(E)-butenyl 4-diphosphate (HMBPP) into a mixture of isopentenyl diphosphate (IPP) and dimethylallyl diphosphate (DMAPP). Acts in the terminal step of the DOXP/MEP pathway for isoprenoid precursor biosynthesis. This chain is 4-hydroxy-3-methylbut-2-enyl diphosphate reductase, found in Rhodopirellula baltica (strain DSM 10527 / NCIMB 13988 / SH1).